The chain runs to 27 residues: Potassium channel toxin alpha-KTx 9.11 (27 aa).

3 cysteine pairs are disulfide-bonded: Cys3–Cys19, Cys6–Cys23, and Cys10–Cys25.

It belongs to the short scorpion toxin superfamily. Potassium channel inhibitor family. Alpha-KTx 09 subfamily. Expressed by the venom gland.

The protein localises to the secreted. In terms of biological role, may play a role in blocking voltage-gated potassium channels Kv1.2/KCNA2, Kv1.3/KCNA3 and Kv1.6/KCNA6 to a lesser extent. In Mesobuthus gibbosus (Mediterranean checkered scorpion), this protein is Potassium channel toxin alpha-KTx 9.11.